The sequence spans 1262 residues: Protein stoned-B (1262 aa).

4 consecutive short sequence motifs (NPF) follow at residues Asn-3 to Phe-5, Asn-19 to Phe-21, Asn-33 to Phe-35, and Asn-43 to Phe-45. The tract at residues Ala-17–Met-36 is disordered. The interval Ala-49–Ala-189 is disordered. The span at Asp-50–Ala-60 shows a compositional bias: acidic residues. The segment covering Pro-101–His-111 has biased composition (low complexity). Residues His-115–Pro-124 are compositionally biased toward pro residues. Residues Thr-128–Glu-145 show a composition bias toward polar residues. Positions Asp-172–Ala-189 are enriched in low complexity. The NPF 5 motif lies at Asn-210–Phe-212. Disordered stretches follow at residues Val-225 to Thr-452 and Glu-474 to Pro-507. The segment covering Lys-233–Ala-272 has biased composition (pro residues). Residues Asp-325–Gln-345 show a composition bias toward acidic residues. Positions Gln-384 to Thr-401 are enriched in polar residues. Residues Asp-417–Glu-429 show a composition bias toward acidic residues. The short motif at Asn-493–Phe-495 is the NPF 6 element. A phosphoserine mark is found at Ser-623 and Ser-626. The segment at Ser-643–Asp-709 is disordered. The NPF 7 signature appears at Asn-673–Phe-675. Residues Gly-728 to Leu-902 form the SHD domain. Residues Lys-847–Val-1108 form an interaction with Syt region. Residues Met-906–Glu-1219 enclose the MHD domain. The disordered stretch occupies residues Thr-1226–Asn-1262. Residues Pro-1241–Pro-1254 are compositionally biased toward low complexity.

Belongs to the Stoned B family. Interacts with the second C2 domain of Syt.

The protein resides in the cytoplasm. The protein localises to the synapse. In terms of biological role, adapter protein involved in endocytic recycling of synaptic vesicles membranes. May act by mediating the retrieval of synaptotagmin protein Syt from the plasma membrane, thereby facilitating the internalization of multiple synaptic vesicles from the plasma membrane. This chain is Protein stoned-B (stnB), found in Drosophila melanogaster (Fruit fly).